The primary structure comprises 318 residues: Ribosomal RNA small subunit methyltransferase H (318 aa).

S-adenosyl-L-methionine-binding positions include 38-40, aspartate 58, tyrosine 86, aspartate 107, and glutamine 114; that span reads GGH.

Belongs to the methyltransferase superfamily. RsmH family.

Its subcellular location is the cytoplasm. It carries out the reaction cytidine(1402) in 16S rRNA + S-adenosyl-L-methionine = N(4)-methylcytidine(1402) in 16S rRNA + S-adenosyl-L-homocysteine + H(+). Specifically methylates the N4 position of cytidine in position 1402 (C1402) of 16S rRNA. This Methylibium petroleiphilum (strain ATCC BAA-1232 / LMG 22953 / PM1) protein is Ribosomal RNA small subunit methyltransferase H.